The sequence spans 197 residues: dITP/XTP pyrophosphatase (197 aa).

11 to 16 contributes to the substrate binding site; it reads SHNAGK. The Mg(2+) site is built by Glu-42 and Asp-71. Asp-71 functions as the Proton acceptor in the catalytic mechanism. Substrate is bound by residues Ser-72, 155 to 158, Lys-178, and 183 to 184; these read FGYD and HR.

It belongs to the HAM1 NTPase family. As to quaternary structure, homodimer. Requires Mg(2+) as cofactor.

It catalyses the reaction XTP + H2O = XMP + diphosphate + H(+). The catalysed reaction is dITP + H2O = dIMP + diphosphate + H(+). It carries out the reaction ITP + H2O = IMP + diphosphate + H(+). In terms of biological role, pyrophosphatase that catalyzes the hydrolysis of nucleoside triphosphates to their monophosphate derivatives, with a high preference for the non-canonical purine nucleotides XTP (xanthosine triphosphate), dITP (deoxyinosine triphosphate) and ITP. Seems to function as a house-cleaning enzyme that removes non-canonical purine nucleotides from the nucleotide pool, thus preventing their incorporation into DNA/RNA and avoiding chromosomal lesions. The chain is dITP/XTP pyrophosphatase from Pseudomonas aeruginosa (strain ATCC 15692 / DSM 22644 / CIP 104116 / JCM 14847 / LMG 12228 / 1C / PRS 101 / PAO1).